The following is a 167-amino-acid chain: UPF0303 protein mlr5144 (167 aa).

It belongs to the UPF0303 family.

In Mesorhizobium japonicum (strain LMG 29417 / CECT 9101 / MAFF 303099) (Mesorhizobium loti (strain MAFF 303099)), this protein is UPF0303 protein mlr5144.